The chain runs to 500 residues: Na(+)/H(+) antiporter NhaB (500 aa).

A run of 12 helical transmembrane segments spans residues 28-50, 68-88, 98-118, 121-141, 145-165, 205-225, 244-264, 311-331, 350-370, 394-414, 449-469, and 477-497; these read FLLL…VLVG, GGLL…ALYA, LLLM…LLLF, LLLG…LAAL, FLDA…FFAV, LLMH…VGEP, QVAP…VLLE, VLIV…LLVI, FQEA…VAVI, MLFI…VATI, VATP…IAPL, and MVWM…WAVS.

This sequence belongs to the NhaB Na(+)/H(+) (TC 2.A.34) antiporter family.

The protein resides in the cell inner membrane. It carries out the reaction 2 Na(+)(in) + 3 H(+)(out) = 2 Na(+)(out) + 3 H(+)(in). Na(+)/H(+) antiporter that extrudes sodium in exchange for external protons. This chain is Na(+)/H(+) antiporter NhaB, found in Pseudomonas aeruginosa (strain UCBPP-PA14).